Reading from the N-terminus, the 877-residue chain is AP-5 complex subunit beta-1 (877 aa).

In terms of assembly, probably part of the adaptor protein complex 5 (AP-5), a tetramer composed of AP5B1, AP5M1, AP5S1 and AP5Z1. Interacts with ZFYVE26 and SPG11.

In terms of biological role, as part of AP-5, a probable fifth adaptor protein complex, it may be involved in endosomal transport. The sequence is that of AP-5 complex subunit beta-1 (AP5B1) from Bos taurus (Bovine).